A 595-amino-acid chain; its full sequence is UvrABC system protein C (595 aa).

One can recognise a GIY-YIG domain in the interval 14-91 (DSPGCYIHKD…IQENKPKYNI (78 aa)). In terms of domain architecture, UVR spans 196-231 (DKIVNELRDKMTKASELMEFERAAEYRDLIEGIGLL).

It belongs to the UvrC family. As to quaternary structure, interacts with UvrB in an incision complex.

The protein resides in the cytoplasm. The UvrABC repair system catalyzes the recognition and processing of DNA lesions. UvrC both incises the 5' and 3' sides of the lesion. The N-terminal half is responsible for the 3' incision and the C-terminal half is responsible for the 5' incision. In Streptococcus mutans serotype c (strain ATCC 700610 / UA159), this protein is UvrABC system protein C.